The sequence spans 364 residues: S-adenosylmethionine:tRNA ribosyltransferase-isomerase (364 aa).

Belongs to the QueA family. In terms of assembly, monomer.

It localises to the cytoplasm. It carries out the reaction 7-aminomethyl-7-carbaguanosine(34) in tRNA + S-adenosyl-L-methionine = epoxyqueuosine(34) in tRNA + adenine + L-methionine + 2 H(+). It participates in tRNA modification; tRNA-queuosine biosynthesis. Its function is as follows. Transfers and isomerizes the ribose moiety from AdoMet to the 7-aminomethyl group of 7-deazaguanine (preQ1-tRNA) to give epoxyqueuosine (oQ-tRNA). The polypeptide is S-adenosylmethionine:tRNA ribosyltransferase-isomerase (Bradyrhizobium sp. (strain BTAi1 / ATCC BAA-1182)).